The chain runs to 428 residues: MKIYKLQTPVNAILENIAADKSISHRFAIFSLLTQEENKAQNYLLAQDTLNTLEIIKNLGAKIEQKDSCVKIIPPKEILSPNCILDCGNSGTAMRLMIGFLAGIFGFFVLSGDKYLNNRPMRRISKPLTQIGARIYGRNEANLAPLCIEGQKLKAFNFKSEISSAQVKTAMILSAFRADNVCTFSEISLSRNHSENMLKAMKAPIRVSNDGLSLEINPLKKPLKAQNIIIPNDPSSAFYFVLAAIILPKSQIILKNILLNPTRIEAYKILQKMGAKLEMTITQNDFETIGEIRVESSKLNGIEVKDNIAWLIDEAPALAIAFALAKGKSSLINAKELRVKESDRIAVMVENLKLCGVEARELDDGFEIEGGCELKSSKIKSYGDHRIAMSFAILGLLCGIEIDDSDCIKTSFPNFIEILSNLGARIDY.

Residues lysine 21, serine 22, and arginine 26 each contribute to the 3-phosphoshikimate site. Lysine 21 contributes to the phosphoenolpyruvate binding site. Phosphoenolpyruvate is bound by residues glycine 91 and arginine 119. Serine 164, glutamine 166, aspartate 313, and lysine 340 together coordinate 3-phosphoshikimate. Position 166 (glutamine 166) interacts with phosphoenolpyruvate. The active-site Proton acceptor is aspartate 313. Residues arginine 344 and arginine 386 each contribute to the phosphoenolpyruvate site.

This sequence belongs to the EPSP synthase family. Monomer.

It localises to the cytoplasm. It catalyses the reaction 3-phosphoshikimate + phosphoenolpyruvate = 5-O-(1-carboxyvinyl)-3-phosphoshikimate + phosphate. The protein operates within metabolic intermediate biosynthesis; chorismate biosynthesis; chorismate from D-erythrose 4-phosphate and phosphoenolpyruvate: step 6/7. In terms of biological role, catalyzes the transfer of the enolpyruvyl moiety of phosphoenolpyruvate (PEP) to the 5-hydroxyl of shikimate-3-phosphate (S3P) to produce enolpyruvyl shikimate-3-phosphate and inorganic phosphate. The chain is 3-phosphoshikimate 1-carboxyvinyltransferase from Campylobacter jejuni (strain RM1221).